A 59-amino-acid chain; its full sequence is MSALYNLIFRNNTAFVGAVFAGAFAFELAYDNGMDKVWDKINKGRQWKDIRHKYVEAEE.

Residues 1-15 lie on the Mitochondrial matrix side of the membrane; the sequence is MSALYNLIFRNNTAF. The helical transmembrane segment at 16–41 threads the bilayer; sequence VGAVFAGAFAFELAYDNGMDKVWDKI. The Mitochondrial intermembrane segment spans residues 42–59; the sequence is NKGRQWKDIRHKYVEAEE.

This sequence belongs to the UQCR10/QCR9 family. As to quaternary structure, component of the ubiquinol-cytochrome c oxidoreductase (cytochrome b-c1 complex, complex III, CIII), a multisubunit enzyme composed of 10 subunits. The complex is composed of 3 respiratory subunits cytochrome b (cob), cytochrome c1 (cyt-1) and Rieske protein (fes-1), 2 core protein subunits pep and ucr-1, and 5 low-molecular weight protein subunits qcr6, qcr7, qcr8, qcr9 and probably NCU16844/qcr10. The complex exists as an obligatory dimer and forms supercomplexes (SCs) in the inner mitochondrial membrane with NADH-ubiquinone oxidoreductase (complex I, CI) and cytochrome c oxidase (complex IV, CIV), resulting in different assemblies (supercomplexes SCI(1)III(2), SCIII(2)IV(1) and SCIII(2)IV(2) as well as higher order I(x)III(y)IV(z) megacomplexes).

It localises to the mitochondrion inner membrane. Component of the ubiquinol-cytochrome c oxidoreductase, a multisubunit transmembrane complex that is part of the mitochondrial electron transport chain which drives oxidative phosphorylation. The respiratory chain contains 3 multisubunit complexes succinate dehydrogenase (complex II, CII), ubiquinol-cytochrome c oxidoreductase (cytochrome b-c1 complex, complex III, CIII) and cytochrome c oxidase (complex IV, CIV), that cooperate to transfer electrons derived from NADH and succinate to molecular oxygen, creating an electrochemical gradient over the inner membrane that drives transmembrane transport and the ATP synthase. The cytochrome b-c1 complex catalyzes electron transfer from ubiquinol to cytochrome c, linking this redox reaction to translocation of protons across the mitochondrial inner membrane, with protons being carried across the membrane as hydrogens on the quinol. In the process called Q cycle, 2 protons are consumed from the matrix, 4 protons are released into the intermembrane space and 2 electrons are passed to cytochrome c. The polypeptide is Cytochrome b-c1 complex subunit 9, mitochondrial (qcr9) (Neurospora crassa (strain ATCC 24698 / 74-OR23-1A / CBS 708.71 / DSM 1257 / FGSC 987)).